Here is a 159-residue protein sequence, read N- to C-terminus: Ribosomal RNA large subunit methyltransferase H (159 aa).

S-adenosyl-L-methionine is bound by residues Leu-76, Gly-108, and 127-132 (FGLLTL).

This sequence belongs to the RNA methyltransferase RlmH family. In terms of assembly, homodimer.

It is found in the cytoplasm. The enzyme catalyses pseudouridine(1915) in 23S rRNA + S-adenosyl-L-methionine = N(3)-methylpseudouridine(1915) in 23S rRNA + S-adenosyl-L-homocysteine + H(+). Functionally, specifically methylates the pseudouridine at position 1915 (m3Psi1915) in 23S rRNA. The sequence is that of Ribosomal RNA large subunit methyltransferase H from Streptococcus pyogenes serotype M6 (strain ATCC BAA-946 / MGAS10394).